Consider the following 179-residue polypeptide: Large ribosomal subunit protein uL5 (179 aa).

The protein belongs to the universal ribosomal protein uL5 family. Part of the 50S ribosomal subunit; part of the 5S rRNA/L5/L18/L25 subcomplex. Contacts the 5S rRNA and the P site tRNA. Forms a bridge to the 30S subunit in the 70S ribosome.

This is one of the proteins that bind and probably mediate the attachment of the 5S RNA into the large ribosomal subunit, where it forms part of the central protuberance. In the 70S ribosome it contacts protein S13 of the 30S subunit (bridge B1b), connecting the 2 subunits; this bridge is implicated in subunit movement. Contacts the P site tRNA; the 5S rRNA and some of its associated proteins might help stabilize positioning of ribosome-bound tRNAs. The sequence is that of Large ribosomal subunit protein uL5 from Prochlorococcus marinus (strain NATL2A).